Reading from the N-terminus, the 437-residue chain is uncharacterized protein (437 aa).

The helical transmembrane segment at Leu-47–Ala-67 threads the bilayer.

It is found in the membrane. This is an uncharacterized protein from Methanocaldococcus jannaschii (strain ATCC 43067 / DSM 2661 / JAL-1 / JCM 10045 / NBRC 100440) (Methanococcus jannaschii).